The sequence spans 107 residues: MMKVLVVVALLPTLISYSSSEGIDDLEADELLSLMANEQTRKECIPKHHECTSNKHGCCRGNFFKYKCQCTTVVTQDGEQTERCFCGTPPHHKAAELVVGFGKKIFG.

An N-terminal signal peptide occupies residues 1 to 20; that stretch reads MMKVLVVVALLPTLISYSSS. Residues 21-41 constitute a propeptide that is removed on maturation; the sequence is EGIDDLEADELLSLMANEQTR. 4 disulfide bridges follow: C44-C59, C51-C68, C58-C86, and C70-C84.

This sequence belongs to the neurotoxin 19 (CSTX) family. 04 (U1-Lctx) subfamily. Expressed by the venom gland.

The protein resides in the secreted. In Lycosa singoriensis (Wolf spider), this protein is U1-lycotoxin-Ls1b.